A 168-amino-acid chain; its full sequence is 2-C-methyl-D-erythritol 2,4-cyclodiphosphate synthase (168 aa).

A divalent metal cation is bound by residues Asp-11 and His-13. Residues 11 to 13 (DVH) and 41 to 42 (HS) contribute to the 4-CDP-2-C-methyl-D-erythritol 2-phosphate site. Residue His-49 coordinates a divalent metal cation. 4-CDP-2-C-methyl-D-erythritol 2-phosphate is bound by residues 63 to 65 (DIG), 68 to 72 (FPDTD), 139 to 142 (TTTE), Phe-146, and Arg-149.

Belongs to the IspF family. Homotrimer. Requires a divalent metal cation as cofactor.

It carries out the reaction 4-CDP-2-C-methyl-D-erythritol 2-phosphate = 2-C-methyl-D-erythritol 2,4-cyclic diphosphate + CMP. Its pathway is isoprenoid biosynthesis; isopentenyl diphosphate biosynthesis via DXP pathway; isopentenyl diphosphate from 1-deoxy-D-xylulose 5-phosphate: step 4/6. Functionally, involved in the biosynthesis of isopentenyl diphosphate (IPP) and dimethylallyl diphosphate (DMAPP), two major building blocks of isoprenoid compounds. Catalyzes the conversion of 4-diphosphocytidyl-2-C-methyl-D-erythritol 2-phosphate (CDP-ME2P) to 2-C-methyl-D-erythritol 2,4-cyclodiphosphate (ME-CPP) with a corresponding release of cytidine 5-monophosphate (CMP). This Psychrobacter cryohalolentis (strain ATCC BAA-1226 / DSM 17306 / VKM B-2378 / K5) protein is 2-C-methyl-D-erythritol 2,4-cyclodiphosphate synthase.